The sequence spans 55 residues: Large ribosomal subunit protein bL32 (55 aa).

The segment covering 1–23 (MAVPKKKTSKAKRDQRRAHWKRK) has biased composition (basic residues). The tract at residues 1–26 (MAVPKKKTSKAKRDQRRAHWKRKATI) is disordered.

It belongs to the bacterial ribosomal protein bL32 family.

The polypeptide is Large ribosomal subunit protein bL32 (Picosynechococcus sp. (strain ATCC 27264 / PCC 7002 / PR-6) (Agmenellum quadruplicatum)).